Consider the following 436-residue polypeptide: Homeobox protein PKNOX1 (436 aa).

A compositionally biased stretch (polar residues) spans 1 to 20; that stretch reads MMATQTLSIDSYQDGQQMQV. Residues 1–49 form a disordered region; the sequence is MMATQTLSIDSYQDGQQMQVVTELKTEQDPNCSEPDAEGVSPPPVESQT. Ser33 and Ser41 each carry phosphoserine. The MEIS N-terminal domain occupies 80–163; the sequence is GSEGTTSASF…MNSETLLSGE (84 aa). The segment at residues 259-321 is a DNA-binding region (homeobox; TALE-type); sequence SKNKRGVLPK…NARRRILQPM (63 aa). Residues 401-436 are disordered; that stretch reads AGQSEDESVDSTEEDAGALAPAHISGLVLENSDSLQ. The span at 404–416 shows a compositional bias: acidic residues; that stretch reads SEDESVDSTEEDA.

This sequence belongs to the TALE/MEIS homeobox family. Interacts with MN1. In terms of tissue distribution, ubiquitous. Isoform 2 is expressed in all examined tissues except in bone marrow.

The protein resides in the nucleus. In terms of biological role, activates transcription in the presence of PBX1A and HOXA1. This chain is Homeobox protein PKNOX1, found in Homo sapiens (Human).